We begin with the raw amino-acid sequence, 1411 residues long: Uveal autoantigen with coiled-coil domains and ankyrin repeats (1411 aa).

The residue at position 1 (Met1) is an N-acetylmethionine. Positions Met1–Ser30 are disordered. Positions Ala13 to Ser30 are enriched in low complexity. ANK repeat units follow at residues Glu69 to Thr98, Ala102 to His131, Gln135 to Ala164, Asp168 to Ser197, Gln201 to Leu230, and Leu234 to Lys263. Residues Lys263–Phe301 form a disordered region. Ser280 is modified (phosphoserine). Residues Thr282–Phe301 are compositionally biased toward basic and acidic residues. Coiled-coil stretches lie at residues His299–Lys379, Ser442–Leu624, and Val652–Arg1380. Residues Gly1006–Glu1031 are disordered.

In terms of assembly, component of the apoptosome complex, composed of APAF1, pro-caspase-9 and UACA. In the complex, it probably interacts directly with APAF1. Interacts with LGALS3, ARF6 and ACTB. Interacts with RAB39A. In terms of tissue distribution, highly expressed in heart, liver, kidney and testis. Weakly expressed in lung and skeletal muscle. Not expressed in brain and spleen.

It localises to the nucleus. Its subcellular location is the cytoplasm. It is found in the cytoskeleton. Its function is as follows. Regulates APAF1 expression and plays an important role in the regulation of stress-induced apoptosis. Promotes apoptosis by regulating three pathways, apoptosome up-regulation, LGALS3/galectin-3 down-regulation and NF-kappa-B inactivation. Regulates the redistribution of APAF1 into the nucleus after proapoptotic stress. Down-regulates the expression of LGALS3 by inhibiting NFKB1. In terms of biological role, modulates isoactin dynamics to regulate the morphological alterations required for cell growth and motility. Interaction with ARF6 may modulate cell shape and motility after injury. May be involved in multiple neurite formation. This Mus musculus (Mouse) protein is Uveal autoantigen with coiled-coil domains and ankyrin repeats (Uaca).